A 65-amino-acid polypeptide reads, in one-letter code: Large ribosomal subunit protein bL35 (65 aa).

The protein belongs to the bacterial ribosomal protein bL35 family.

This is Large ribosomal subunit protein bL35 from Yersinia pseudotuberculosis serotype O:1b (strain IP 31758).